Consider the following 1399-residue polypeptide: DNA-directed RNA polymerase subunit beta' (1399 aa).

Zn(2+)-binding residues include C70, C72, C85, and C88. The Mg(2+) site is built by D460, D462, and D464. C814, C888, C895, and C898 together coordinate Zn(2+).

Belongs to the RNA polymerase beta' chain family. As to quaternary structure, the RNAP catalytic core consists of 2 alpha, 1 beta, 1 beta' and 1 omega subunit. When a sigma factor is associated with the core the holoenzyme is formed, which can initiate transcription. The cofactor is Mg(2+). Zn(2+) is required as a cofactor.

The catalysed reaction is RNA(n) + a ribonucleoside 5'-triphosphate = RNA(n+1) + diphosphate. In terms of biological role, DNA-dependent RNA polymerase catalyzes the transcription of DNA into RNA using the four ribonucleoside triphosphates as substrates. This is DNA-directed RNA polymerase subunit beta' from Pseudomonas syringae pv. syringae (strain B728a).